The sequence spans 882 residues: Leucine--tRNA ligase (882 aa).

A 'HIGH' region motif is present at residues 43–53; the sequence is PYPSGNLHMGH. The short motif at 632–636 is the 'KMSKS' region element; sequence TMSKS. Residue Lys-635 coordinates ATP.

The protein belongs to the class-I aminoacyl-tRNA synthetase family.

The protein resides in the cytoplasm. The enzyme catalyses tRNA(Leu) + L-leucine + ATP = L-leucyl-tRNA(Leu) + AMP + diphosphate. In Synechococcus sp. (strain JA-2-3B'a(2-13)) (Cyanobacteria bacterium Yellowstone B-Prime), this protein is Leucine--tRNA ligase.